Reading from the N-terminus, the 191-residue chain is SCO2-like protein RP031 (191 aa).

It belongs to the SCO1/2 family.

The protein is SCO2-like protein RP031 of Rickettsia prowazekii (strain Madrid E).